Reading from the N-terminus, the 356-residue chain is Histidinol-phosphate aminotransferase (356 aa).

Lys214 carries the N6-(pyridoxal phosphate)lysine modification.

The protein belongs to the class-II pyridoxal-phosphate-dependent aminotransferase family. Histidinol-phosphate aminotransferase subfamily. In terms of assembly, homodimer. It depends on pyridoxal 5'-phosphate as a cofactor.

The enzyme catalyses L-histidinol phosphate + 2-oxoglutarate = 3-(imidazol-4-yl)-2-oxopropyl phosphate + L-glutamate. The protein operates within amino-acid biosynthesis; L-histidine biosynthesis; L-histidine from 5-phospho-alpha-D-ribose 1-diphosphate: step 7/9. In Escherichia coli (strain SMS-3-5 / SECEC), this protein is Histidinol-phosphate aminotransferase.